The chain runs to 155 residues: MADVPKREVENVEFVFEVMGSPGEGIDAFDLGDALRALNLNPTLALIEKMGGTKKRNEKKIKLDEFLPIYSQVKKEKEQGCYEDFIECLKLYDKEENGTMLLAELQHALLALGESLDDEQVENLFADCMDPEDDEGFIPYSQFIQRLMSDPVVFD.

EF-hand domains are found at residues 7 to 41 (REVENVEFVFEVMGSPGEGIDAFDLGDALRALNLN) and 80 to 115 (GCYEDFIECLKLYDKEENGTMLLAELQHALLALGES).

As to quaternary structure, myosin is a hexamer of 2 heavy chains and 4 light chains.

The sequence is that of Myosin light chain alkali (Mlc1) from Drosophila virilis (Fruit fly).